The sequence spans 798 residues: Glycogen phosphorylase (798 aa).

Position 646 is an N6-(pyridoxal phosphate)lysine (K646).

It belongs to the glycogen phosphorylase family. The cofactor is pyridoxal 5'-phosphate.

The enzyme catalyses [(1-&gt;4)-alpha-D-glucosyl](n) + phosphate = [(1-&gt;4)-alpha-D-glucosyl](n-1) + alpha-D-glucose 1-phosphate. Functionally, phosphorylase is an important allosteric enzyme in carbohydrate metabolism. Enzymes from different sources differ in their regulatory mechanisms and in their natural substrates. However, all known phosphorylases share catalytic and structural properties. The polypeptide is Glycogen phosphorylase (glgP) (Bacillus subtilis (strain 168)).